Consider the following 345-residue polypeptide: sn-glycerol-3-phosphate import ATP-binding protein UgpC (345 aa).

The ABC transporter domain occupies Ile-4–Ile-235. Gly-37–Ser-44 serves as a coordination point for ATP.

This sequence belongs to the ABC transporter superfamily. sn-glycerol-3-phosphate importer (TC 3.A.1.1.3) family. In terms of assembly, the complex is composed of two ATP-binding proteins (UgpC), two transmembrane proteins (UgpA and UgpE) and a solute-binding protein (UgpB).

It localises to the cell inner membrane. The catalysed reaction is sn-glycerol 3-phosphate(out) + ATP + H2O = sn-glycerol 3-phosphate(in) + ADP + phosphate + H(+). Functionally, part of the ABC transporter complex UgpBAEC involved in sn-glycerol-3-phosphate (G3P) import. Responsible for energy coupling to the transport system. This chain is sn-glycerol-3-phosphate import ATP-binding protein UgpC, found in Bartonella bacilliformis (strain ATCC 35685 / KC583 / Herrer 020/F12,63).